A 350-amino-acid chain; its full sequence is Izumo sperm-egg fusion protein 1 (350 aa).

Positions 1-21 (MGPHFTLLCAALAGCLLPAEG) are cleaved as a signal peptide. Intrachain disulfides connect Cys22–Cys149, Cys25–Cys152, Cys135–Cys159, Cys139–Cys165, and Cys182–Cys233. The Extracellular segment spans residues 22 to 292 (CVICDPSVVL…LQPEKMLASR (271 aa)). Residues 148 to 160 (WCKNCKKEVHACR) form an important for interaction with IZUMO1R region. The region spanning 167–251 (ERNVEVPQME…PATIINFHVT (85 aa)) is the Ig-like C2-type domain. Residue Asn204 is glycosylated (N-linked (GlcNAc...) asparagine). A helical membrane pass occupies residues 293–313 (LLGLLICGSLALITGLTFAIF). Residues 314 to 350 (RRRKVIDFIKSSLFGLGSGAAEQTQVPKEKATDSRQQ) are Cytoplasmic-facing. Ser325 bears the Phosphoserine mark.

It belongs to the Izumo family. Monomer, homodimer; disulfide-linked and homooligomer; depending on the context. Interacts with IZUMO1R/JUNO. IZUMO1 and IZUMO1R/JUNO form a complex with 1:1 stoichiometry. In gamete recognition, IZUMO1R/JUNO first binds to monomeric IZUMO1. The weak, but specific interaction with IZUMO1R/JUNO induces IZUMO1 homodimerization. The process follows a tight binding phase where IZUMO1 bends the entire structure towards the sperm membrane side through a thiol-disulfide exchange reaction. The molecule no longer binds to IZUMO1R/JUNO and instead binds to a putative second oocyte receptor. Interacts with ACE3. Part of a oolemmal binding multimeric complex (IZUMO1 complex) composed at least of IZUMO1 and GLIPR1L1; the complex assemblage is influenced by the maturation status of the male germ cell. Interacts with GLIPR1L1. Interacts with FREY; the interaction retains IZUMO1 at the endoplasmic reticulum membrane and coordinates IZUMO1 complex assembly. Interacts with FCRL3/MAIA (via extracellular domain); the interaction replaces IZUMO1R/JUNO as IZUMO1 receptor after sperm-egg adhesion. Interacts with WDR54. Forms a complex with SPACA6 and TMEM81 on spermatocyte cell membrane. Post-translationally, N-glycosylated. Glycosylation is not essential for fusion and for proper protein trafficking in sperm. In terms of processing, phosphorylated. The cytoplasmic C-terminus is phosphorylated and undergoes phosphorylation changes during epididymal transit. Sperm-specific (at protein level). Detectable on sperm surface only after the acrosome reaction.

The protein resides in the cell membrane. It localises to the cytoplasmic vesicle. It is found in the secretory vesicle. The protein localises to the acrosome membrane. Essential sperm cell-surface protein required for fertilization by acting as a ligand for IZUMO1R/JUNO receptor on egg. The IZUMO1:IZUMO1R/JUNO interaction is a necessary adhesion event between sperm and egg that is required for fertilization but is not sufficient for cell fusion. The ligand-receptor interaction probably does not act as a membrane 'fusogen'. Acts a ligand for the human-specific oolemma epitope FCRL3/MAIA during fertilization. FCRL3/MAIA replaces IZUMO1R/JUNO as IZUMO1 receptor after sperm-egg adhesion, which permits species-specific gamete fusion. Plays a critical role in sperm-oolemma binding prior to plasma membrane fusion. Can mediate cell-cell fusion in cultured mammalian cells independently of its binding to IZUMO1R/JUNO. The polypeptide is Izumo sperm-egg fusion protein 1 (Homo sapiens (Human)).